The chain runs to 293 residues: UPF0282 protein MK0213 (293 aa).

Belongs to the UPF0282 family.

This chain is UPF0282 protein MK0213, found in Methanopyrus kandleri (strain AV19 / DSM 6324 / JCM 9639 / NBRC 100938).